A 162-amino-acid chain; its full sequence is Neuritin-like protein (162 aa).

An N-terminal signal peptide occupies residues 1-32 (MMCNCCHCHWRRRCQRLPCALTLLLLLPLAVA). Ala136 is lipidated: GPI-anchor amidated alanine. The propeptide at 137 to 162 (PALAPAPAPVLLAAALALACLLGPLA) is removed in mature form.

The protein belongs to the neuritin family.

The protein localises to the cell membrane. This Mus musculus (Mouse) protein is Neuritin-like protein (Nrn1l).